The sequence spans 290 residues: 4-diphosphocytidyl-2-C-methyl-D-erythritol kinase (290 aa).

Residue Lys14 is part of the active site. 103 to 113 is a binding site for ATP; that stretch reads PMGGGLGGGSS. Asp145 is a catalytic residue.

This sequence belongs to the GHMP kinase family. IspE subfamily. As to quaternary structure, homodimer.

It catalyses the reaction 4-CDP-2-C-methyl-D-erythritol + ATP = 4-CDP-2-C-methyl-D-erythritol 2-phosphate + ADP + H(+). Its pathway is isoprenoid biosynthesis; isopentenyl diphosphate biosynthesis via DXP pathway; isopentenyl diphosphate from 1-deoxy-D-xylulose 5-phosphate: step 3/6. Its function is as follows. Catalyzes the phosphorylation of the position 2 hydroxy group of 4-diphosphocytidyl-2C-methyl-D-erythritol. In Pectobacterium carotovorum subsp. carotovorum (strain PC1), this protein is 4-diphosphocytidyl-2-C-methyl-D-erythritol kinase.